We begin with the raw amino-acid sequence, 270 residues long: MARVPEPTSEVMSYGYSDNENDLFFEADGPGKMKCCFQDLNNSYLEEEGIQLQISHQLHNKSLSHFVSVIVALEKLKKISVPCSLPLQGDDLMNVFHCIFEEEPIILEKCDDNAFVHDAPPRSLDCKFQDINQKSLVLYNSYELRALHLNGTSVNQQAVFRMTFVQEDEDITKIPVALCIKEKNLYLSCVMKDGKPTLQLEMLDPKVYPKKRMEKRFVFNKTEIKKKVEFESSQFPNWYISTSQAEAMPVFLGNNRGGHDITDFTMELSS.

A propeptide spanning residues 1–118 is cleaved from the precursor; the sequence is MARVPEPTSE…KCDDNAFVHD (118 aa).

It belongs to the IL-1 family. As to quaternary structure, monomer. In its precursor form, weakly interacts with full-length MEFV; the mature cytokine does not interact at all. Interacts with integrins ITGAV:ITGBV and ITGA5:ITGB1; integrin-binding is required for IL1B signaling. Interacts with cargo receptor TMED10; the interaction is direct and is required for the secretion of IL1B mature form. Interacts with HSP90AB1; the interaction facilitates cargo translocation into the ERGIC. Interacts with HSP90B1; the interaction facilitates cargo translocation into the ERGIC.

The protein resides in the cytoplasm. It localises to the cytosol. The protein localises to the secreted. Its subcellular location is the lysosome. It is found in the extracellular exosome. Potent pro-inflammatory cytokine. Initially discovered as the major endogenous pyrogen, induces prostaglandin synthesis, neutrophil influx and activation, T-cell activation and cytokine production, B-cell activation and antibody production, and fibroblast proliferation and collagen production. Promotes Th17 differentiation of T-cells. Synergizes with IL12/interleukin-12 to induce IFNG synthesis from T-helper 1 (Th1) cells. Plays a role in angiogenesis by inducing VEGF production synergistically with TNF and IL6. Involved in transduction of inflammation downstream of pyroptosis: its mature form is specifically released in the extracellular milieu by passing through the gasdermin-D (GSDMD) pore. The protein is Interleukin-1 beta (IL1B) of Mustela putorius furo (European domestic ferret).